Consider the following 287-residue polypeptide: MIIKVPASTANLGPGFDSIGMAVSLYLEVEVLSVSDRFQVDHVIPKIPHDETNLIVKTALTVYPGLQPLHLRVKNDIPLAHGLGSSSSAIAAGIELADHFGKLGLSDEEKVQIGARIEGHPDNIAPTILGGLVVGTEVDQHFDAIKAPLPPYTLVAYVPDYNLATKDARKVLPKELDFKTATHGSAIANTLVASLFTQNYKMAGELMESDVFHEPYREKLVPELNQIREVAHQKHAVATYLSGAGSTVMTWIEDEHVRGFLSGLNKHGLKANTFILHPDKNGVQIIE.

78-88 (PLAHGLGSSSS) contributes to the ATP binding site.

It belongs to the GHMP kinase family. Homoserine kinase subfamily.

It is found in the cytoplasm. It carries out the reaction L-homoserine + ATP = O-phospho-L-homoserine + ADP + H(+). It functions in the pathway amino-acid biosynthesis; L-threonine biosynthesis; L-threonine from L-aspartate: step 4/5. Its function is as follows. Catalyzes the ATP-dependent phosphorylation of L-homoserine to L-homoserine phosphate. This is Homoserine kinase from Lactobacillus acidophilus (strain ATCC 700396 / NCK56 / N2 / NCFM).